The following is a 316-amino-acid chain: 4-hydroxy-3-methylbut-2-enyl diphosphate reductase (316 aa).

C12 lines the [4Fe-4S] cluster pocket. (2E)-4-hydroxy-3-methylbut-2-enyl diphosphate-binding residues include H43 and H81. 2 residues coordinate dimethylallyl diphosphate: H43 and H81. Isopentenyl diphosphate-binding residues include H43 and H81. C103 is a binding site for [4Fe-4S] cluster. H131 contributes to the (2E)-4-hydroxy-3-methylbut-2-enyl diphosphate binding site. H131 contributes to the dimethylallyl diphosphate binding site. H131 provides a ligand contact to isopentenyl diphosphate. Residue E133 is the Proton donor of the active site. Residue T170 participates in (2E)-4-hydroxy-3-methylbut-2-enyl diphosphate binding. C198 contributes to the [4Fe-4S] cluster binding site. S226, N228, and S271 together coordinate (2E)-4-hydroxy-3-methylbut-2-enyl diphosphate. 3 residues coordinate dimethylallyl diphosphate: S226, N228, and S271. Residues S226, N228, and S271 each contribute to the isopentenyl diphosphate site.

Belongs to the IspH family. [4Fe-4S] cluster serves as cofactor.

It carries out the reaction isopentenyl diphosphate + 2 oxidized [2Fe-2S]-[ferredoxin] + H2O = (2E)-4-hydroxy-3-methylbut-2-enyl diphosphate + 2 reduced [2Fe-2S]-[ferredoxin] + 2 H(+). It catalyses the reaction dimethylallyl diphosphate + 2 oxidized [2Fe-2S]-[ferredoxin] + H2O = (2E)-4-hydroxy-3-methylbut-2-enyl diphosphate + 2 reduced [2Fe-2S]-[ferredoxin] + 2 H(+). It participates in isoprenoid biosynthesis; dimethylallyl diphosphate biosynthesis; dimethylallyl diphosphate from (2E)-4-hydroxy-3-methylbutenyl diphosphate: step 1/1. The protein operates within isoprenoid biosynthesis; isopentenyl diphosphate biosynthesis via DXP pathway; isopentenyl diphosphate from 1-deoxy-D-xylulose 5-phosphate: step 6/6. In terms of biological role, catalyzes the conversion of 1-hydroxy-2-methyl-2-(E)-butenyl 4-diphosphate (HMBPP) into a mixture of isopentenyl diphosphate (IPP) and dimethylallyl diphosphate (DMAPP). Acts in the terminal step of the DOXP/MEP pathway for isoprenoid precursor biosynthesis. This chain is 4-hydroxy-3-methylbut-2-enyl diphosphate reductase, found in Geobacillus kaustophilus (strain HTA426).